The primary structure comprises 306 residues: Acetyl-coenzyme A carboxylase carboxyl transferase subunit beta (306 aa).

Residues 27-296 (LWHKCPSCEA…PRFVAPVIEP (270 aa)) form the CoA carboxyltransferase N-terminal domain. Zn(2+) is bound by residues Cys31, Cys34, Cys50, and Cys53. A C4-type zinc finger spans residues 31 to 53 (CPSCEAVLYRPELEKTLDVCPKC).

It belongs to the AccD/PCCB family. In terms of assembly, acetyl-CoA carboxylase is a heterohexamer composed of biotin carboxyl carrier protein (AccB), biotin carboxylase (AccC) and two subunits each of ACCase subunit alpha (AccA) and ACCase subunit beta (AccD). Zn(2+) is required as a cofactor.

It is found in the cytoplasm. It catalyses the reaction N(6)-carboxybiotinyl-L-lysyl-[protein] + acetyl-CoA = N(6)-biotinyl-L-lysyl-[protein] + malonyl-CoA. Its pathway is lipid metabolism; malonyl-CoA biosynthesis; malonyl-CoA from acetyl-CoA: step 1/1. Its function is as follows. Component of the acetyl coenzyme A carboxylase (ACC) complex. Biotin carboxylase (BC) catalyzes the carboxylation of biotin on its carrier protein (BCCP) and then the CO(2) group is transferred by the transcarboxylase to acetyl-CoA to form malonyl-CoA. The protein is Acetyl-coenzyme A carboxylase carboxyl transferase subunit beta of Pseudomonas savastanoi pv. phaseolicola (strain 1448A / Race 6) (Pseudomonas syringae pv. phaseolicola (strain 1448A / Race 6)).